The chain runs to 755 residues: MTRPVTLSEPHFSQHTLNKYASLMAQGNGYLGLRASHEEDYTRQTRGMYLAGLYHRAGKGEINELVNLPDVVGMEIAINGEVFSLSHEAWQRELDFASGELRRNVVWRTSNGSGYTIASRRFVSADQLPLIALEITITPLDADASVLISTGIDATQTNHGRQHLDETQVRVFGQHLMQGSYTTQDGRSDVAISCCCKVSGDVQQCYTAKERRLLQHTSAQLHAGETMTLQKLVWIDWRDDRQAALDEWGSASLRQLEMCAQQSYDQLLAASTENWRQWWQKRRITVNGGEAHDQQALDYALYHLRIMTPAHDERSSIAAKGLTGEGYKGHVFWDTEVFLLPFHLFSDPTVARSLLRYRWHNLPGAQEKARRNGWQGALFPWESARSGEEETPEFAAINIRTGLRQKVASAQAEHHLVADIAWAVIQYWQTTGDESFIAHEGMALLLETAKFWISRAVRVNDRLEIHDVIGPDEYTEHVNNNAYTSYMARYNVQQALNIARQFGCSDDAFIHRAEMFLKELWMPEIQPDGVLPQDDSFMAKPAINLAKYKAAAGKQTILLDYSRAEVNEMQILKQADVVMLNYMLPEQFSAASCLANLQFYEPRTIHDSSLSKAIHGIVAARCGLLTQSYQFWREGTEIDLGADPHSCDDGIHAAATGAIWLGAIQGFAGVSVRDGELHLNPALPEQWQQLSFPLFWQGCELQVTLDAQRIAIRTSAPVSLRLNGQLITVAEESVFCLGDFILPFNGTATKHQEDE.

333–334 (WD) contributes to the substrate binding site. E473 functions as the Proton donor in the catalytic mechanism. 573 to 574 (KQ) serves as a coordination point for substrate.

The protein belongs to the glycosyl hydrolase 65 family.

It catalyses the reaction kojibiose + phosphate = beta-D-glucose 1-phosphate + D-glucose. Its function is as follows. In vitro catalyzes the phosphorolysis of D-kojibiose into beta-D-glucose 1-phosphate and D-glucose. No other disaccharides tested substitute for D-kojibiose. In the reverse direction disaccharides can be formed from beta-D-glucose 1-phosphate plus D-glucose, L-sorbose, D-sorbitol, L-iditol or 1,5-anhydro-D-glucitol, but with low efficiency. The beta-D-glucose 1-phosphate product is the substrate for YcjU (AC P77366), the next apparent enzyme in the putative biochemical pathway encoded in this locus (yjcM to ycjW). The protein is Kojibiose phosphorylase (ycjT) of Escherichia coli (strain K12).